The following is a 278-amino-acid chain: 4-deoxy-L-threo-5-hexosulose-uronate ketol-isomerase (278 aa).

Positions 196, 198, 203, and 245 each coordinate Zn(2+).

It belongs to the KduI family. The cofactor is Zn(2+).

It catalyses the reaction 5-dehydro-4-deoxy-D-glucuronate = 3-deoxy-D-glycero-2,5-hexodiulosonate. It participates in glycan metabolism; pectin degradation; 2-dehydro-3-deoxy-D-gluconate from pectin: step 4/5. Functionally, catalyzes the isomerization of 5-dehydro-4-deoxy-D-glucuronate to 3-deoxy-D-glycero-2,5-hexodiulosonate. The sequence is that of 4-deoxy-L-threo-5-hexosulose-uronate ketol-isomerase from Yersinia pestis bv. Antiqua (strain Antiqua).